A 159-amino-acid polypeptide reads, in one-letter code: uncharacterized protein (159 aa).

Disordered stretches follow at residues methionine 1–serine 29 and threonine 114–threonine 159. Over residues serine 15–serine 29 the composition is skewed to polar residues.

This is an uncharacterized protein from Homo sapiens (Human).